Reading from the N-terminus, the 268-residue chain is Hydroxyacylglutathione hydrolase (268 aa).

Positions 56, 58, 60, 61, 113, 130, and 168 each coordinate Zn(2+).

The protein belongs to the metallo-beta-lactamase superfamily. Glyoxalase II family. As to quaternary structure, monomer. The cofactor is Zn(2+).

The catalysed reaction is an S-(2-hydroxyacyl)glutathione + H2O = a 2-hydroxy carboxylate + glutathione + H(+). It participates in secondary metabolite metabolism; methylglyoxal degradation; (R)-lactate from methylglyoxal: step 2/2. Thiolesterase that catalyzes the hydrolysis of S-D-lactoyl-glutathione to form glutathione and D-lactic acid. The sequence is that of Hydroxyacylglutathione hydrolase from Hydrogenovibrio crunogenus (strain DSM 25203 / XCL-2) (Thiomicrospira crunogena).